Reading from the N-terminus, the 605-residue chain is Solute carrier family 23 member 1 (605 aa).

A disordered region spans residues 1 to 30; that stretch reads MKTPEDPGSPKQHEVVDSAGTSTRDRQAPL. Over 1-59 the chain is Cytoplasmic; that stretch reads MKTPEDPGSPKQHEVVDSAGTSTRDRQAPLPTEPKFDMLYKIEDVPPWYLCILLGFQHY. The helical transmembrane segment at 60–80 threads the bilayer; the sequence is LTCFSGTIAVPFLLAEALCVG. The Extracellular portion of the chain corresponds to 81 to 88; it reads RDQHMVSQ. Residues 89 to 109 form a helical membrane-spanning segment; it reads LIGTIFTCVGITTLIQTTVGI. Arg-110 is a topological domain (cytoplasmic). The helical transmembrane segment at 111–131 threads the bilayer; that stretch reads LPLFQASAFAFLVPAKSILAL. At 132-166 the chain is on the extracellular side; the sequence is ERWKCPSEEEIYGNWSMPLNTSHIWHPRIREVQGA. N-linked (GlcNAc...) asparagine glycans are attached at residues Asn-145 and Asn-151. Residues 167-187 form a helical membrane-spanning segment; the sequence is IMVSSMVEVVIGLMGLPGALL. At 188-214 the chain is on the cytoplasmic side; it reads SYIGPLTVTPTVSLIGLSVFQAAGDRA. The chain crosses the membrane as a helical span at residues 215–232; that stretch reads GSHWGISACSILLIVLFS. The Extracellular segment spans residues 233–236; sequence QYLR. The segment at residues 237 to 250 is an intramembrane region (helical); sequence NLTFLLPVYRWGKG. Over 251-257 the chain is Extracellular; it reads LTLFRVQ. A helical transmembrane segment spans residues 258–278; the sequence is IFKMFPIVLAIMTVWLLCYVL. Residues 279–319 lie on the Cytoplasmic side of the membrane; the sequence is TLTDVLPADPTVYGFQARTDARGDIMAISPWIRIPYPCQWG. Residues 320–340 form a helical membrane-spanning segment; sequence LPTVTVAAVLGMFSATLAGII. At 341 to 365 the chain is on the extracellular side; it reads ESIGDYYACARLAGAPPPPVHAINR. A helical transmembrane segment spans residues 366–386; that stretch reads GIFTEGICCIIAGLLGTGNGS. Residues 387 to 409 are Cytoplasmic-facing; it reads TSSSPNIGVLGITKVGSRRVVQY. A helical transmembrane segment spans residues 410-430; sequence GAGIMLILGAIGKFTALFASL. Over 431-433 the chain is Extracellular; the sequence is PDP. A helical membrane pass occupies residues 434–454; that stretch reads ILGGMFCTLFGMITAVGLSNL. Over 455 to 464 the chain is Cytoplasmic; the sequence is QFVDMNSSRN. The chain crosses the membrane as a helical span at residues 465 to 485; it reads LFVLGFSMFFGLTLPNYLDSN. Residues 486-497 lie on the Extracellular side of the membrane; that stretch reads PGAINTGIPEVD. Residues 498–518 traverse the membrane as a helical segment; it reads QILTVLLTTEMFVGGCLAFIL. The Cytoplasmic segment spans residues 519 to 605; sequence DNTVPGSPEE…IETGSVCTKV (87 aa). A Phosphothreonine modification is found at Thr-598. Ser-600 is modified (phosphoserine). At Thr-603 the chain carries Phosphothreonine.

Belongs to the nucleobase:cation symporter-2 (NCS2) (TC 2.A.40) family. In terms of processing, phosphorylated. As to expression, expressed in kidney (at protein level).

The protein resides in the cell membrane. The catalysed reaction is L-ascorbate(out) + 2 Na(+)(out) = L-ascorbate(in) + 2 Na(+)(in). It catalyses the reaction urate(out) + 2 Na(+)(out) = urate(in) + 2 Na(+)(in). Its function is as follows. Sodium:L-ascorbate cotransporter. Mediates electrogenic uptake of vitamin C, with a stoichiometry of 2 Na(+) for each L-ascorbate. Has retained some ancestral activity toward nucleobases such as urate, an oxidized purine. Low-affinity high-capacity sodium:urate cotransporter, may regulate serum urate levels by serving as a renal urate re-absorber. In Mus musculus (Mouse), this protein is Solute carrier family 23 member 1 (Slc23a1).